The following is a 254-amino-acid chain: Claudin-16 (254 aa).

At Met1–Asp22 the chain is on the cytoplasmic side. Residues Leu23–Thr43 form a helical membrane-spanning segment. At Trp44–Arg98 the chain is on the extracellular side. The helical transmembrane segment at Ala99–Leu119 threads the bilayer. Over Asp120 to Arg134 the chain is Cytoplasmic. Residues Ile135–Val155 traverse the membrane as a helical segment. At Trp156–Gly188 the chain is on the extracellular side. Residues Met189–Phe209 form a helical membrane-spanning segment. Residues Lys210–Val254 lie on the Cytoplasmic side of the membrane. Positions Thr252–Val254 match the Interaction with TJP1 motif.

It belongs to the claudin family. As to quaternary structure, can form heteropolymeric tight junction strands with other claudins. Interacts with CLDN19. Interacts (via PDZ-binding motif TRV) with TJP1 (via PDZ domain). Cannot form tight junction strands on its own. As to expression, expressed preferentially in kidney.

Its subcellular location is the cell junction. The protein resides in the tight junction. It is found in the cell membrane. The enzyme catalyses Mg(2+)(in) = Mg(2+)(out). It catalyses the reaction Ca(2+)(in) = Ca(2+)(out). It carries out the reaction Na(+)(in) = Na(+)(out). The catalysed reaction is K(+)(in) = K(+)(out). The enzyme catalyses Rb(+)(in) = Rb(+)(out). It catalyses the reaction Cs(+)(in) = Cs(+)(out). It carries out the reaction Li(+)(in) = Li(+)(out). Its function is as follows. Forms paracellular channels: coassembles with CLDN19 into tight junction strands with cation-selective channels through the strands, conveying epithelial permeability in a process known as paracellular tight junction permeability. Involved in the maintenance of ion gradients along the nephron. In the thick ascending limb (TAL) of Henle's loop, facilitates sodium paracellular permeability from the interstitial compartment to the lumen, contributing to the lumen-positive transepithelial potential that drives paracellular magnesium and calcium reabsorption. The sequence is that of Claudin-16 (CLDN16) from Bos taurus (Bovine).